Reading from the N-terminus, the 332-residue chain is DNA-directed RNA polymerase subunit alpha (332 aa).

The tract at residues 1–234 (MTVTVSQVLR…DQLSVFGDFT (234 aa)) is alpha N-terminal domain (alpha-NTD). Residues 248-332 (VDPVLLRPID…PGVSQYGMLG (85 aa)) are alpha C-terminal domain (alpha-CTD).

Belongs to the RNA polymerase alpha chain family. As to quaternary structure, homodimer. The RNAP catalytic core consists of 2 alpha, 1 beta, 1 beta' and 1 omega subunit. When a sigma factor is associated with the core the holoenzyme is formed, which can initiate transcription.

The catalysed reaction is RNA(n) + a ribonucleoside 5'-triphosphate = RNA(n+1) + diphosphate. In terms of biological role, DNA-dependent RNA polymerase catalyzes the transcription of DNA into RNA using the four ribonucleoside triphosphates as substrates. The polypeptide is DNA-directed RNA polymerase subunit alpha (Xylella fastidiosa (strain M23)).